The following is a 310-amino-acid chain: Probable RuBisCO transcriptional regulator (310 aa).

Residues 6–63 (FTLDQLRILKAIASEGSFKKAAESLYISQPAVSLQIQNLEKQLNIPIFDRANRKAVFT) form the HTH lysR-type domain. A DNA-binding region (H-T-H motif) is located at residues 23 to 42 (FKKAAESLYISQPAVSLQIQ).

The protein belongs to the LysR transcriptional regulatory family.

It localises to the plastid. It is found in the chloroplast. Functionally, trans-acting transcriptional regulator of RuBisCO genes (rbcL and rbcS) expression. The chain is Probable RuBisCO transcriptional regulator (rbcR) from Guillardia theta (Cryptophyte).